A 465-amino-acid polypeptide reads, in one-letter code: L-cystine uptake protein TcyP (465 aa).

A run of 10 helical transmembrane segments spans residues 3–23 (LFLT…LFYM), 34–54 (VLLA…FFAP), 73–93 (YVRF…LSAF), 105–125 (ISAL…AIGI), 184–204 (PTSA…YLGV), 224–246 (AIIM…AIMT), 263–283 (FVLA…IILA), 338–358 (LSIG…VMIA), 370–390 (FILL…GVGG), and 394–414 (FAAI…GLLI).

It belongs to the dicarboxylate/amino acid:cation symporter (DAACS) (TC 2.A.23) family.

The protein localises to the membrane. Functionally, mediates uptake of L-cystine, the oxidized form of L-cysteine. The sequence is that of L-cystine uptake protein TcyP from Shouchella clausii (strain KSM-K16) (Alkalihalobacillus clausii).